The primary structure comprises 352 residues: C-C chemokine receptor type 5 (352 aa).

Over 1-30 the chain is Extracellular; sequence MDYQVSSPIYDIDYGPSEPCRKIDVKQMGA. A Sulfotyrosine modification is found at tyrosine 3. Serine 6 and serine 7 each carry an O-linked (GalNAc...) serine glycan. Sulfotyrosine is present on residues tyrosine 10 and tyrosine 14. Intrachain disulfides connect cysteine 20–cysteine 269 and cysteine 101–cysteine 178. The helical transmembrane segment at 31–58 threads the bilayer; that stretch reads QLLPPLYSLVFLFGFVGNMLVVLILINC. Residues 59–68 are Cytoplasmic-facing; that stretch reads KRLKSMTDIY. A helical membrane pass occupies residues 69–89; it reads LLNLAISDLLFLFTIPFWAHY. Residues 90–102 lie on the Extracellular side of the membrane; the sequence is AAGQWDFGNTMCQ. Residues 103–124 form a helical membrane-spanning segment; it reads FLTALYFIGFFSGIFFIILLTI. Over 125 to 141 the chain is Cytoplasmic; sequence DRYLAIVHAVFALKART. Residues 142 to 166 traverse the membrane as a helical segment; that stretch reads VTFGVVTSVITWVVAVFASLPGIIF. Residues 167–198 lie on the Extracellular side of the membrane; the sequence is TRSQKEGYHYSCSPHFPFSQYRFWKNFETLKM. The chain crosses the membrane as a helical span at residues 199–218; that stretch reads VILGLVLPLLVMVICYSGIL. The Cytoplasmic segment spans residues 219-235; the sequence is KTLLRCRNEKKRHRAVR. The chain crosses the membrane as a helical span at residues 236 to 260; that stretch reads LIFTIMIVYFLFWAPYNIVLLINTY. Over 261–277 the chain is Extracellular; it reads PDFFGVNNCNSSNRLDQ. The helical transmembrane segment at 278–301 threads the bilayer; sequence AMQVTETLGMTHCCVNPIIYAFVG. Residues 302 to 352 lie on the Cytoplasmic side of the membrane; that stretch reads EKFRNYLVIFFQKHIAKRFCKCCSIFQKEAPERANSVYTRSTGEQEISVGL. S-palmitoyl cysteine attachment occurs at residues cysteine 321, cysteine 323, and cysteine 324. Phosphoserine; by BARK1 is present on residues serine 337, serine 342, and serine 349.

The protein belongs to the G-protein coupled receptor 1 family. Interacts with PRAF2. Efficient ligand binding to CCL3/MIP-1alpha and CCL4/MIP-1beta requires sulfation, O-glycosylation and sialic acid modifications. Glycosylation on Ser-6 is required for efficient binding of CCL4. Interacts with GRK2. Interacts with ARRB1 and ARRB2. Interacts with CNIH4. Interacts with S100A4; this interaction stimulates T-lymphocyte chemotaxis. In terms of processing, sulfated on at least 2 of the N-terminal tyrosines. Sulfation is required for efficient binding of the chemokines, CCL3 and CCL4. Post-translationally, palmitoylation in the C-terminal is important for cell surface expression. Phosphorylation on serine residues in the C-terminal is stimulated by binding CC chemokines especially by APO-RANTES. In terms of processing, O-glycosylated, but not N-glycosylated. Ser-6 appears to be the major site even if Ser-7 may be also O-glycosylated. Also sialylated glycans present which contribute to chemokine binding. Ser-17 may also be glycosylated and, if so, with small moieties such as a T-antigen.

Its subcellular location is the cell membrane. In terms of biological role, receptor for a number of inflammatory CC-chemokines including CCL3/MIP-1-alpha, CCL4/MIP-1-beta and RANTES and subsequently transduces a signal by increasing the intracellular calcium ion level. May play a role in the control of granulocytic lineage proliferation or differentiation. Participates in T-lymphocyte migration to the infection site by acting as a chemotactic receptor. The polypeptide is C-C chemokine receptor type 5 (CCR5) (Saimiri sciureus (Common squirrel monkey)).